Here is a 361-residue protein sequence, read N- to C-terminus: Eukaryotic translation initiation factor 3 subunit F (361 aa).

Composition is skewed to low complexity over residues 1–32 and 42–73; these read MASPAVPANVPPATAAAAPAPVVTAAPASAPT and ATPAASPAPVSSDPAVAAPAAPGQTPASAPAP. The tract at residues 1–91 is disordered; sequence MASPAVPANV…PGPALPGPFP (91 aa). Position 2 is an N-acetylalanine (Ala-2). Phosphoserine; by CDK11; in vitro is present on Ser-52. The segment covering 74-90 has biased composition (pro residues); sequence AQTPAPSQPGPALPGPF. An MPN domain is found at 96–226; sequence VRLHPVILAS…IKAYVSTLMG (131 aa). Lys-242 bears the N6-acetyllysine mark. At Ser-262 the chain carries Phosphoserine.

It belongs to the eIF-3 subunit F family. As to quaternary structure, component of the eukaryotic translation initiation factor 3 (eIF-3) complex, which is composed of 13 subunits: EIF3A, EIF3B, EIF3C, EIF3D, EIF3E, EIF3F, EIF3G, EIF3H, EIF3I, EIF3J, EIF3K, EIF3L and EIF3M. The eIF-3 complex appears to include 3 stable modules: module A is composed of EIF3A, EIF3B, EIF3G and EIF3I; module B is composed of EIF3F, EIF3H, and EIF3M; and module C is composed of EIF3C, EIF3D, EIF3E, EIF3K and EIF3L. EIF3C of module C binds EIF3B of module A and EIF3H of module B, thereby linking the three modules. EIF3J is a labile subunit that binds to the eIF-3 complex via EIF3B. The eIF-3 complex may interact with RPS6KB1 under conditions of nutrient depletion. Mitogenic stimulation may lead to binding and activation of a complex composed of MTOR and RPTOR, leading to phosphorylation and release of RPS6KB1 and binding of EIF4B to eIF-3. Interacts with RNF139; the interaction leads to protein translation inhibitions in a ubiquitination-dependent manner. Interacts with DTX1, the interaction is required for deubiquitinating activity towards NOTCH1. Phosphorylation is enhanced upon serum stimulation. Phosphorylated during apoptosis by caspase-processed CDK11.

The protein localises to the cytoplasm. It carries out the reaction Thiol-dependent hydrolysis of ester, thioester, amide, peptide and isopeptide bonds formed by the C-terminal Gly of ubiquitin (a 76-residue protein attached to proteins as an intracellular targeting signal).. Component of the eukaryotic translation initiation factor 3 (eIF-3) complex, which is required for several steps in the initiation of protein synthesis. The eIF-3 complex associates with the 40S ribosome and facilitates the recruitment of eIF-1, eIF-1A, eIF-2:GTP:methionyl-tRNAi and eIF-5 to form the 43S pre-initiation complex (43S PIC). The eIF-3 complex stimulates mRNA recruitment to the 43S PIC and scanning of the mRNA for AUG recognition. The eIF-3 complex is also required for disassembly and recycling of post-termination ribosomal complexes and subsequently prevents premature joining of the 40S and 60S ribosomal subunits prior to initiation. The eIF-3 complex specifically targets and initiates translation of a subset of mRNAs involved in cell proliferation, including cell cycling, differentiation and apoptosis, and uses different modes of RNA stem-loop binding to exert either translational activation or repression. In terms of biological role, deubiquitinates activated NOTCH1, promoting its nuclear import, thereby acting as a positive regulator of Notch signaling. This is Eukaryotic translation initiation factor 3 subunit F (Eif3f) from Mus musculus (Mouse).